Reading from the N-terminus, the 311-residue chain is UDP-N-acetylenolpyruvoylglucosamine reductase (311 aa).

Positions 29–191 constitute an FAD-binding PCMH-type domain; sequence IGGKADIVLK…LSARLKLKPI (163 aa). Arg172 is a catalytic residue. Ser223 functions as the Proton donor in the catalytic mechanism. The active site involves Glu299.

The protein belongs to the MurB family. FAD serves as cofactor.

Its subcellular location is the cytoplasm. It catalyses the reaction UDP-N-acetyl-alpha-D-muramate + NADP(+) = UDP-N-acetyl-3-O-(1-carboxyvinyl)-alpha-D-glucosamine + NADPH + H(+). It functions in the pathway cell wall biogenesis; peptidoglycan biosynthesis. Functionally, cell wall formation. The protein is UDP-N-acetylenolpyruvoylglucosamine reductase of Chloroherpeton thalassium (strain ATCC 35110 / GB-78).